The following is a 156-amino-acid chain: Cyclic pyranopterin monophosphate synthase (156 aa).

Substrate is bound by residues 73–75 (LCH) and 110–111 (ME). Residue Asp-125 is part of the active site.

The protein belongs to the MoaC family. Homohexamer; trimer of dimers.

The catalysed reaction is (8S)-3',8-cyclo-7,8-dihydroguanosine 5'-triphosphate = cyclic pyranopterin phosphate + diphosphate. The protein operates within cofactor biosynthesis; molybdopterin biosynthesis. Its function is as follows. Catalyzes the conversion of (8S)-3',8-cyclo-7,8-dihydroguanosine 5'-triphosphate to cyclic pyranopterin monophosphate (cPMP). This Pseudomonas putida (strain W619) protein is Cyclic pyranopterin monophosphate synthase.